The following is a 128-amino-acid chain: Iron-sulfur cluster insertion protein ErpA (128 aa).

Residues Cys56, Cys120, and Cys122 each coordinate iron-sulfur cluster.

Belongs to the HesB/IscA family. In terms of assembly, homodimer. Iron-sulfur cluster is required as a cofactor.

Its function is as follows. Required for insertion of 4Fe-4S clusters for at least IspG. The sequence is that of Iron-sulfur cluster insertion protein ErpA from Xanthomonas campestris pv. campestris (strain 8004).